A 465-amino-acid polypeptide reads, in one-letter code: Cysteine--tRNA ligase (465 aa).

Cys27 serves as a coordination point for Zn(2+). Positions 29–39 (PTVYNFFHIGN) match the 'HIGH' region motif. 3 residues coordinate Zn(2+): Cys207, His232, and Glu236. The short motif at 264-268 (KMSKS) is the 'KMSKS' region element. Position 267 (Lys267) interacts with ATP.

This sequence belongs to the class-I aminoacyl-tRNA synthetase family. In terms of assembly, monomer. Zn(2+) serves as cofactor.

The protein resides in the cytoplasm. It carries out the reaction tRNA(Cys) + L-cysteine + ATP = L-cysteinyl-tRNA(Cys) + AMP + diphosphate. This chain is Cysteine--tRNA ligase, found in Clostridium botulinum (strain Okra / Type B1).